The primary structure comprises 456 residues: RuvB-like 1 (456 aa).

ATP is bound at residue 70–77 (GPPGTGKT).

This sequence belongs to the RuvB family. In terms of assembly, forms homohexameric rings. Can form a dodecamer with ruvbl2 made of two stacked hexameric rings. Is a component of the RNA polymerase II holoenzyme complex. Component of the chromatin-remodeling Ino80 complex. Component of some MLL1/MLL complex.

It is found in the nucleus. It localises to the dynein axonemal particle. The catalysed reaction is ATP + H2O = ADP + phosphate + H(+). Its function is as follows. Has single-stranded DNA-stimulated ATPase and ATP-dependent DNA helicase (3' to 5') activity suggesting a role in nuclear processes such as recombination and transcription. Proposed core component of the chromatin remodeling INO80 complex which exhibits DNA- and nucleosome-activated ATPase activity and catalyzes ATP-dependent nucleosome sliding. The polypeptide is RuvB-like 1 (ruvbl1) (Xenopus laevis (African clawed frog)).